The chain runs to 344 residues: Adenosine deaminase (344 aa).

Zn(2+) is bound by residues H14 and H16. Positions 16, 18, and 177 each coordinate substrate. A Zn(2+)-binding site is contributed by H204. E207 serves as the catalytic Proton donor. D284 serves as a coordination point for Zn(2+).

This sequence belongs to the metallo-dependent hydrolases superfamily. Adenosine and AMP deaminases family. Adenosine deaminase subfamily. Requires Zn(2+) as cofactor.

The catalysed reaction is adenosine + H2O + H(+) = inosine + NH4(+). The enzyme catalyses 2'-deoxyadenosine + H2O + H(+) = 2'-deoxyinosine + NH4(+). In terms of biological role, catalyzes the hydrolytic deamination of adenosine and 2-deoxyadenosine. In Haemophilus ducreyi (strain 35000HP / ATCC 700724), this protein is Adenosine deaminase.